Reading from the N-terminus, the 376-residue chain is Chaperone protein DnaJ (376 aa).

In terms of domain architecture, J spans 5–70 (DYYEILGVSK…QKRAAYDQYG (66 aa)). A CR-type zinc finger spans residues 131-209 (GVTKEIRIPT…CHGHGRVERS (79 aa)). Residues Cys144, Cys147, Cys161, Cys164, Cys183, Cys186, Cys197, and Cys200 each coordinate Zn(2+). 4 CXXCXGXG motif repeats span residues 144–151 (CDVCHGSG), 161–168 (CPTCHGSG), 183–190 (CPHCQGRG), and 197–204 (CNKCHGHG).

The protein belongs to the DnaJ family. In terms of assembly, homodimer. Zn(2+) serves as cofactor.

It is found in the cytoplasm. In terms of biological role, participates actively in the response to hyperosmotic and heat shock by preventing the aggregation of stress-denatured proteins and by disaggregating proteins, also in an autonomous, DnaK-independent fashion. Unfolded proteins bind initially to DnaJ; upon interaction with the DnaJ-bound protein, DnaK hydrolyzes its bound ATP, resulting in the formation of a stable complex. GrpE releases ADP from DnaK; ATP binding to DnaK triggers the release of the substrate protein, thus completing the reaction cycle. Several rounds of ATP-dependent interactions between DnaJ, DnaK and GrpE are required for fully efficient folding. Also involved, together with DnaK and GrpE, in the DNA replication of plasmids through activation of initiation proteins. This Shigella flexneri protein is Chaperone protein DnaJ.